The sequence spans 133 residues: Ribosome-binding factor A (133 aa).

It belongs to the RbfA family. Monomer. Binds 30S ribosomal subunits, but not 50S ribosomal subunits or 70S ribosomes.

It is found in the cytoplasm. Its function is as follows. One of several proteins that assist in the late maturation steps of the functional core of the 30S ribosomal subunit. Associates with free 30S ribosomal subunits (but not with 30S subunits that are part of 70S ribosomes or polysomes). Required for efficient processing of 16S rRNA. May interact with the 5'-terminal helix region of 16S rRNA. This Escherichia coli O127:H6 (strain E2348/69 / EPEC) protein is Ribosome-binding factor A.